Consider the following 726-residue polypeptide: Catalase-peroxidase (726 aa).

Residues 91-214 (WHSAGTYRIA…LGAVQMGLIY (124 aa)) constitute a cross-link (tryptophyl-tyrosyl-methioninium (Trp-Tyr) (with M-240)). The active-site Proton acceptor is the His92. Positions 214–240 (YVNPEGPNGNPDPLAAARDIRETFARM) form a cross-link, tryptophyl-tyrosyl-methioninium (Tyr-Met) (with W-91). Residue His255 participates in heme b binding. Residues 335–362 (AHQWRPKAGAGADSVPDPHDPNKRRTPS) are disordered.

Belongs to the peroxidase family. Peroxidase/catalase subfamily. As to quaternary structure, homodimer or homotetramer. Heme b serves as cofactor. Formation of the three residue Trp-Tyr-Met cross-link is important for the catalase, but not the peroxidase activity of the enzyme.

The catalysed reaction is H2O2 + AH2 = A + 2 H2O. It carries out the reaction 2 H2O2 = O2 + 2 H2O. Functionally, bifunctional enzyme with both catalase and broad-spectrum peroxidase activity. The sequence is that of Catalase-peroxidase from Pseudomonas fluorescens (strain ATCC BAA-477 / NRRL B-23932 / Pf-5).